A 61-amino-acid chain; its full sequence is Large ribosomal subunit protein bL28A (61 aa).

Belongs to the bacterial ribosomal protein bL28 family.

This chain is Large ribosomal subunit protein bL28A (rpmB1), found in Streptomyces coelicolor (strain ATCC BAA-471 / A3(2) / M145).